The following is a 216-amino-acid chain: Urease accessory protein UreG (216 aa).

Residue 25 to 32 coordinates GTP; it reads GPVGSGKT.

It belongs to the SIMIBI class G3E GTPase family. UreG subfamily. Homodimer. UreD, UreF and UreG form a complex that acts as a GTP-hydrolysis-dependent molecular chaperone, activating the urease apoprotein by helping to assemble the nickel containing metallocenter of UreC. The UreE protein probably delivers the nickel.

It is found in the cytoplasm. In terms of biological role, facilitates the functional incorporation of the urease nickel metallocenter. This process requires GTP hydrolysis, probably effectuated by UreG. The protein is Urease accessory protein UreG of Burkholderia thailandensis (strain ATCC 700388 / DSM 13276 / CCUG 48851 / CIP 106301 / E264).